The sequence spans 105 residues: MQVLIGTKLVTEGIDIKQLMMVIMLDNRLNIIELIQGVGRLRDGGLCYLLSRKNSWAARNRKGELPPIKEGCITEQVREFYGLESKKGKKGPACWMLWLQDRPVC.

Residues 2–42 (QVLIGTKLVTEGIDIKQLMMVIMLDNRLNIIELIQGVGRLR) enclose the Helicase C-terminal domain.

It belongs to the helicase family. Yeast subtelomeric Y' repeat subfamily.

This is an uncharacterized protein from Saccharomyces cerevisiae (strain ATCC 204508 / S288c) (Baker's yeast).